Here is a 107-residue protein sequence, read N- to C-terminus: MDQFAHISAHDAHQKLAAGAARLVDIRDPQSFETAHAVGAFHLTNGTLVRFMNEVDFDTPVIVMCYHGNSSQGAAQYLLQQGYDEVYSLDGGFEAWRREFPIQAGDA.

The region spanning 17 to 101 (AAGAARLVDI…GFEAWRREFP (85 aa)) is the Rhodanese domain. The active-site Cysteine persulfide intermediate is C65.

The protein belongs to the GlpE family.

The protein resides in the cytoplasm. The catalysed reaction is thiosulfate + hydrogen cyanide = thiocyanate + sulfite + 2 H(+). The enzyme catalyses thiosulfate + [thioredoxin]-dithiol = [thioredoxin]-disulfide + hydrogen sulfide + sulfite + 2 H(+). Its function is as follows. Transferase that catalyzes the transfer of sulfur from thiosulfate to thiophilic acceptors such as cyanide or dithiols. May function in a CysM-independent thiosulfate assimilation pathway by catalyzing the conversion of thiosulfate to sulfite, which can then be used for L-cysteine biosynthesis. The sequence is that of Thiosulfate sulfurtransferase GlpE from Aeromonas hydrophila subsp. hydrophila (strain ATCC 7966 / DSM 30187 / BCRC 13018 / CCUG 14551 / JCM 1027 / KCTC 2358 / NCIMB 9240 / NCTC 8049).